A 484-amino-acid chain; its full sequence is MSAPLSIEQDDLLTDDLKSWLSDIDFSNDNEEAIEMEPSDIEMSSPPIDIETSPPEEADVNLDDTWATVQKNGNNKLNRFILTFFPSDMDTKWLEPETYFENSPNKFDCWTGQYEYCPDTGKLHAHIYIECNHKHRIRFNVFHREIRKYHQSVQLQLAKRASKKQRQSAINYVTADFKRAPGSLVFRWEHNKFPSDFDPKCVNKKSKSDKVSKDEQHETQRLWIESKPRHWTWDQIVHENEESKKLLFGCTAGEKYHKGRHAEDARRTINDVIIFYGAGGTGKTTEAQAWGSEDEPVQECRYYRRNPDDGAFWGGGRTCYKGQRIVHYEEFAGQEAFGRLKEVCDIGKHGPAVNVKNGGALLNHDTVIFTSNIHPAGWFHKLWESDPKQWMPFERRITQVRFYPSHRADGSLNQPDENNPPYFIDQTEEFRQFVGDYDKAKEHAELHWPLKEAPEPTAQVFVPGRSHGVTENTFFEYCKTGRAP.

The Nuclear localization signal motif lies at 146–153 (IRKYHQSV).

It localises to the host nucleus. Functionally, plays an essential for the replication of viral DNA. Presumably cleaves viral genomic dsRNA replicative form to initiate rolling circle replication. The polypeptide is Replication-associated protein (Chaetoceros (Chaetoceros sp. DNA virus 7)).